The primary structure comprises 422 residues: Testin (422 aa).

Positions 92–199 (MILTNPVPAK…GDVKLPGELE (108 aa)) constitute a PET domain. Residues 198–224 (LETKATDKNNVNSGDRSTSAAVGAMED) are disordered. Polar residues predominate over residues 205–217 (KNNVNSGDRSTSA). LIM zinc-binding domains follow at residues 234–297 (YSCY…CDSE), 299–359 (PRCA…KHAA), and 362–422 (QGCH…KMMS).

Belongs to the prickle / espinas / testin family.

The protein localises to the cytoplasm. It localises to the cell junction. The protein resides in the focal adhesion. Scaffold protein that may play a role in cell adhesion, cell spreading and in the reorganization of the actin cytoskeleton. May play a role in the regulation of cell proliferation. May inhibit cell growth. The sequence is that of Testin (TES) from Gallus gallus (Chicken).